We begin with the raw amino-acid sequence, 326 residues long: DNA polymerase III subunit delta' (326 aa).

DNA polymerase III contains a core (composed of alpha, epsilon and theta chains) that associates with a tau subunit. This core dimerizes to form the POLIII' complex. PolIII' associates with the gamma complex (composed of gamma, delta, delta', psi and chi chains) and with the beta chain to form the complete DNA polymerase III complex.

The enzyme catalyses DNA(n) + a 2'-deoxyribonucleoside 5'-triphosphate = DNA(n+1) + diphosphate. DNA polymerase III is a complex, multichain enzyme responsible for most of the replicative synthesis in bacteria. This DNA polymerase also exhibits 3' to 5' exonuclease activity. This chain is DNA polymerase III subunit delta' (holB), found in Buchnera aphidicola subsp. Acyrthosiphon pisum (strain APS) (Acyrthosiphon pisum symbiotic bacterium).